The chain runs to 64 residues: Small ribosomal subunit protein bS21 (64 aa).

Residues Lys-42–Tyr-64 are disordered. Basic residues predominate over residues Ala-50–Tyr-64.

Belongs to the bacterial ribosomal protein bS21 family.

In Malacoplasma penetrans (strain HF-2) (Mycoplasma penetrans), this protein is Small ribosomal subunit protein bS21.